The sequence spans 360 residues: uncharacterized protein (360 aa).

The disordered stretch occupies residues 1–33 (MSGRRKGCSAATASSSSSSPPSRLPPLPGHARR).

The protein belongs to the herpesviridae US22 family.

This is an uncharacterized protein from Human cytomegalovirus (strain AD169) (HHV-5).